We begin with the raw amino-acid sequence, 197 residues long: dITP/XTP pyrophosphatase (197 aa).

8–13 (TGNPGK) is a substrate binding site. 2 residues coordinate Mg(2+): Glu40 and Asp69. Asp69 acts as the Proton acceptor in catalysis. Substrate is bound by residues Ser70, 154–157 (FGYD), Lys177, and 182–183 (HR).

It belongs to the HAM1 NTPase family. In terms of assembly, homodimer. Requires Mg(2+) as cofactor.

It carries out the reaction XTP + H2O = XMP + diphosphate + H(+). It catalyses the reaction dITP + H2O = dIMP + diphosphate + H(+). The enzyme catalyses ITP + H2O = IMP + diphosphate + H(+). Its function is as follows. Pyrophosphatase that catalyzes the hydrolysis of nucleoside triphosphates to their monophosphate derivatives, with a high preference for the non-canonical purine nucleotides XTP (xanthosine triphosphate), dITP (deoxyinosine triphosphate) and ITP. Seems to function as a house-cleaning enzyme that removes non-canonical purine nucleotides from the nucleotide pool, thus preventing their incorporation into DNA/RNA and avoiding chromosomal lesions. In Yersinia pestis, this protein is dITP/XTP pyrophosphatase.